The chain runs to 61 residues: Tryptophyllin-T1 (61 aa).

The signal sequence occupies residues 1 to 22 (MDFLKKSLFLVLFLGLVSISLC). A propeptide spanning residues 23-53 (DEEKRQDDDEASEREEKKEIHEEGNQEERRD) is cleaved from the precursor. Positions 25-61 (EKRQDDDEASEREEKKEIHEEGNQEERRDRPPSWIPK) are disordered. Basic and acidic residues predominate over residues 36-55 (REEKKEIHEEGNQEERRDRP). Position 56 is a 4-hydroxyproline; partial (Pro56).

The protein belongs to the frog skin active peptide (FSAP) family. Tryptophillin subfamily. As to expression, expressed by the skin glands.

The protein localises to the secreted. The protein is Tryptophyllin-T1 of Pithecopus azureus (Orange-legged monkey tree frog).